Consider the following 166-residue polypeptide: Small ribosomal subunit protein uS5 (166 aa).

In terms of domain architecture, S5 DRBM spans 11–74 (LQEKLIAVNR…EKARRNMINV (64 aa)).

The protein belongs to the universal ribosomal protein uS5 family. As to quaternary structure, part of the 30S ribosomal subunit. Contacts proteins S4 and S8.

Functionally, with S4 and S12 plays an important role in translational accuracy. Its function is as follows. Located at the back of the 30S subunit body where it stabilizes the conformation of the head with respect to the body. This chain is Small ribosomal subunit protein uS5, found in Actinobacillus succinogenes (strain ATCC 55618 / DSM 22257 / CCUG 43843 / 130Z).